The following is an 873-amino-acid chain: Coatomer subunit gamma-2 (873 aa).

Over residues 1 to 11 the composition is skewed to basic and acidic residues; sequence MIKKFDKKDEE. Residues 1–21 are disordered; that stretch reads MIKKFDKKDEESGSGSNPFQH. 6 HEAT repeats span residues 64–101, 283–320, 321–355, 356–392, 395–430, and 467–504; these read TEATEAFFAMTRLFQSNDQTLRRMCYLTIKEMANISED, RELAPAVSVLQLFCSSPKAALRYAAVRTLNKVAMKHPS, AVTACNLDLENLITDSNRSIATLAITTLLKTGSES, SVDRLMKQISSFVSEISDEFKVVVVQAISALCQKYPR, SVMMNFLSNMLRDDGGFEYKRAIVDCIISIIEENPE, and PTPSKYIRFIFNRVVLESEAVRAAAVSALAKFGAQNDD.

It belongs to the COPG family. As to quaternary structure, oligomeric complex.

Its subcellular location is the cytoplasm. It localises to the golgi apparatus membrane. The protein resides in the cytoplasmic vesicle. It is found in the COPI-coated vesicle membrane. Its function is as follows. The coatomer is a cytosolic protein complex that binds to dilysine motifs and reversibly associates with Golgi non-clathrin-coated vesicles, which further mediate biosynthetic protein transport from the ER, via the Golgi up to the trans Golgi network. Coatomer complex is required for budding from Golgi membranes, and is essential for the retrograde Golgi-to-ER transport of dilysine-tagged proteins. In Danio rerio (Zebrafish), this protein is Coatomer subunit gamma-2 (copg2).